Here is a 319-residue protein sequence, read N- to C-terminus: L-lactate dehydrogenase (319 aa).

Residues valine 17, aspartate 38, lysine 43, tyrosine 69, and 83–84 (GA) contribute to the NAD(+) site. Residues glutamine 86, arginine 92, and 124–127 (NPVD) contribute to the substrate site. NAD(+)-binding positions include 122-124 (ATN) and serine 147. Residue 152–155 (DTAR) coordinates substrate. Beta-D-fructose 1,6-bisphosphate is bound by residues arginine 157 and histidine 172. Histidine 179 serves as the catalytic Proton acceptor. Phosphotyrosine is present on tyrosine 224. Threonine 233 is a binding site for substrate.

The protein belongs to the LDH/MDH superfamily. LDH family. Homotetramer.

Its subcellular location is the cytoplasm. The catalysed reaction is (S)-lactate + NAD(+) = pyruvate + NADH + H(+). It participates in fermentation; pyruvate fermentation to lactate; (S)-lactate from pyruvate: step 1/1. With respect to regulation, allosterically activated by fructose 1,6-bisphosphate (FBP). Catalyzes the conversion of lactate to pyruvate. This chain is L-lactate dehydrogenase, found in Bacillus licheniformis (strain ATCC 14580 / DSM 13 / JCM 2505 / CCUG 7422 / NBRC 12200 / NCIMB 9375 / NCTC 10341 / NRRL NRS-1264 / Gibson 46).